The chain runs to 149 residues: MPTRLTKTRKHRGNVSAGKGRIGKHRKHPGGRGKAGGQHHHRTNLDKYHPGYFGKVGMRYFHKQQNHFWRPEINLDKLWTLVDSEKKDEYLSKSSASAAPVIDTLAHGYGKVLGKGRLPEVPVIVKARFVSKLAEEKIRAVGGVVELVA.

2 stretches are compositionally biased toward basic residues: residues 1-13 (MPTR…KHRG) and 21-42 (RIGK…HHHR). The interval 1-44 (MPTRLTKTRKHRGNVSAGKGRIGKHRKHPGGRGKAGGQHHHRTN) is disordered.

It belongs to the universal ribosomal protein uL15 family. As to quaternary structure, component of the large ribosomal subunit. Mature ribosomes consist of a small (40S) and a large (60S) subunit. The 40S subunit contains about 32 different proteins and 1 molecule of RNA (18S). The 60S subunit contains 45 different proteins and 3 molecules of RNA (25S, 5.8S and 5S).

It is found in the cytoplasm. Its function is as follows. Component of the ribosome, a large ribonucleoprotein complex responsible for the synthesis of proteins in the cell. The small ribosomal subunit (SSU) binds messenger RNAs (mRNAs) and translates the encoded message by selecting cognate aminoacyl-transfer RNA (tRNA) molecules. The large subunit (LSU) contains the ribosomal catalytic site termed the peptidyl transferase center (PTC), which catalyzes the formation of peptide bonds, thereby polymerizing the amino acids delivered by tRNAs into a polypeptide chain. The nascent polypeptides leave the ribosome through a tunnel in the LSU and interact with protein factors that function in enzymatic processing, targeting, and the membrane insertion of nascent chains at the exit of the ribosomal tunnel. In Candida albicans (strain SC5314 / ATCC MYA-2876) (Yeast), this protein is Large ribosomal subunit protein uL15.